Reading from the N-terminus, the 508-residue chain is MELLDKAVTDFQLFYQKILDLYESDFSPADKWTEIATHIHDNQQIPIGIYKLLRQNDTVNQIDIDYKSDLEQLNSKISLESDFIVKSSLIIASMHFIIYDMITREGNYSSIMYGSEEMNIPSVHNMIYYVYISTKNQQNIYFHAYILLFGLESIFNKKFYVGMDFEFTNKKIQLSQLNFEHNVSTKSIIMIVSPNELEDIMMNNFIKIIICNTNIKKILHGSDSLDIPYMYTHRLDGDPDKIIKFTRTLIDTRFLCEYYKLNSDIVSDNRCSIYDEDPSRSAVYFFKVISDEQQNKLAELLESMPAPHDIQWNIHKMPISQARYAAYDVLYLKVFYYRIIHVATEEDSSDIGKKNIIELYKHLLNEITRFVYLEQNGITLLMAKCKEEVDVVNNYFIRNSEGITKMIDIFNQVSLGLETSDPKVNVDSFSKVNHFKRPITTIIKRIVYGFISYRCRIYKDKSTIWTDKLDNQFIFDFLAKMKFNYLNKMFKELSKTLESRIVAICSVR.

Its subcellular location is the virion. This is an uncharacterized protein from Acanthamoeba polyphaga mimivirus (APMV).